The following is a 1020-amino-acid chain: Phosphatidylinositol 3-kinase VPS34 (1020 aa).

The C2 PI3K-type domain maps to Leu-49–Lys-210. One can recognise a PIK helical domain in the interval Asp-331 to Ile-577. The region spanning Tyr-666–Leu-1004 is the PI3K/PI4K catalytic domain. The G-loop stretch occupies residues Val-672 to Ala-678. Residues Gly-873–Asn-881 form a catalytic loop region. The tract at residues His-892–Pro-913 is activation loop.

The protein belongs to the PI3/PI4-kinase family. Component of the autophagy-specific VPS34 PI3-kinase complex I composed of at least VPS15, VPS30, VPS34, and of the VPS34 PI3-kinase complex II composed of VPS15, VPS30, VPS34 and VPS38. Interacts with VMNA7. In terms of processing, autophosphorylated.

It localises to the golgi apparatus. Its subcellular location is the trans-Golgi network membrane. The protein resides in the endosome membrane. The enzyme catalyses a 1,2-diacyl-sn-glycero-3-phospho-(1D-myo-inositol) + ATP = a 1,2-diacyl-sn-glycero-3-phospho-(1D-myo-inositol-3-phosphate) + ADP + H(+). Its function is as follows. Multifunctional phosphatidylinositol 3-kinase involved in acidification of vacuoles, pH-dependent cell growth, and autophagocytosis. Plays an important role in protein transport and virulence. Component of the autophagy-specific VPS34 PI3-kinase complex I essential to recruit the ATG8-phosphatidylinositol conjugate and the ATG12-ATG5 conjugate to the pre-autophagosomal structure. Also involved in endosome-to-Golgi retrograde transport as part of the VPS34 PI3-kinase complex II. This second complex is required for the endosome-to-Golgi retrieval of PEP1 and KEX2, and the recruitment of VPS5 and VPS7, two components of the retromer complex, to endosomal membranes (probably through the synthesis of a specific pool of phosphatidylinositol 3-phosphate recruiting the retromer to the endosomes). Finally, it might also be involved in ethanol tolerance and cell wall integrity. This chain is Phosphatidylinositol 3-kinase VPS34, found in Candida albicans (strain SC5314 / ATCC MYA-2876) (Yeast).